The primary structure comprises 345 residues: MAMIDLTHDWQLLAQNPAGGLNSSSLLLLVGVFLALFFAAVLGFFFLRYGKLWFQAFMSDADVQLLNLIRMHFTKVNPNVIVQAKVMVAQAGLNIGRRDGISTHRLEAHYLAGGNVMNVIHAIIAAHRAQIPLEFDQAAAIDLAGRDVLDAVQTSVYPKVIDCPDPKRSGKTTLSAITKNGVELRVRTRVTVRTNIEQLIGGATEDTVIARVGEAIISSIGSAETHFKVLENPDMITRVVLSRGLDAQTAFEIVSIDIADIDVGENIGARLQNDQAEADTRVARAQAERRRAEAIAAEQQMNARVSENRSRLVLAEADVPRALAEAFKAGRIGNVSSVAAAEGSA.

The helical transmembrane segment at 26 to 46 threads the bilayer; sequence LLLLVGVFLALFFAAVLGFFF.

It belongs to the flotillin-like FloA family. Homooligomerizes.

The protein resides in the cell membrane. It localises to the membrane raft. Functionally, found in functional membrane microdomains (FMM) that may be equivalent to eukaryotic membrane rafts. FMMs are highly dynamic and increase in number as cells age. Flotillins are thought to be important factors in membrane fluidity. This is Flotillin-like protein FloA 1 from Rhodopirellula baltica (strain DSM 10527 / NCIMB 13988 / SH1).